A 256-amino-acid chain; its full sequence is Ribonuclease HII (256 aa).

An RNase H type-2 domain is found at 73–256 (KLIAGIDEAG…RVSFTKNFIV (184 aa)). A divalent metal cation contacts are provided by Asp-79, Glu-80, and Asp-171.

It belongs to the RNase HII family. Requires Mn(2+) as cofactor. The cofactor is Mg(2+).

The protein resides in the cytoplasm. The catalysed reaction is Endonucleolytic cleavage to 5'-phosphomonoester.. Endonuclease that specifically degrades the RNA of RNA-DNA hybrids. In Acetivibrio thermocellus (strain ATCC 27405 / DSM 1237 / JCM 9322 / NBRC 103400 / NCIMB 10682 / NRRL B-4536 / VPI 7372) (Clostridium thermocellum), this protein is Ribonuclease HII.